A 404-amino-acid chain; its full sequence is 5-azacytidine-induced protein 2 (404 aa).

The homodimerization stretch occupies residues Met1 to Gly198. The stretch at Ala40 to Gly198 forms a coiled coil. An interaction with TBK1 and IKBKE region spans residues Ser229–Cys269. At Ser330 the chain carries Phosphoserine. Disordered regions lie at residues Thr332–Tyr351 and Leu356–Leu390. Ser365 carries the post-translational modification Phosphoserine.

Homodimer. Interacts with IKBKE, TBK1 and TICAM1. Interacts with TAX1BP1. Interacts with CALCOCO2. In terms of processing, ubiquitinated via 'Lys-48'-linked polyubiquitination by TRIM38, leading to its degradation.

It localises to the cytoplasm. Its function is as follows. Adapter protein which binds TBK1 and IKBKE playing a role in antiviral innate immunity. Activates serine/threonine-protein kinase TBK1 and facilitates its oligomerization. Enhances the phosphorylation of NF-kappa-B p65 subunit RELA by TBK1. Promotes TBK1-induced as well as TNF-alpha or PMA-induced activation of NF-kappa-B. Participates in IFNB promoter activation via TICAM1. This chain is 5-azacytidine-induced protein 2 (Azi2), found in Rattus norvegicus (Rat).